The primary structure comprises 250 residues: Large ribosomal subunit protein uL30 (250 aa).

It belongs to the universal ribosomal protein uL30 family.

In Yarrowia lipolytica (strain CLIB 122 / E 150) (Yeast), this protein is Large ribosomal subunit protein uL30 (RPL7).